We begin with the raw amino-acid sequence, 404 residues long: Cytochrome b561 and DOMON domain-containing protein At5g35735 (404 aa).

The N-terminal stretch at 1–25 is a signal peptide; the sequence is MDRTQSPKTALFAVLATLLVLTVNG. The DOMON domain occupies 49–164; sequence LGSFLHWTYN…ITANQLWQVG (116 aa). One can recognise a Cytochrome b561 domain in the interval 170 to 369; sequence VPASHQTSGD…LEPLTWFIVL (200 aa). Residues 172-207 form a disordered region; the sequence is ASHQTSGDNMRSSGRIDFRTGQASAGGGGSGDRLRK. Residues 173 to 183 show a composition bias toward polar residues; it reads SHQTSGDNMRS. Transmembrane regions (helical) follow at residues 210 to 230 and 241 to 261; these read THGVLNAVSWGVLMPMGAMMA and WFYLHIAFQVSGYVIGVAGWA. 3 residues coordinate heme b: H211, H245, and H278. A helical transmembrane segment spans residues 280–300; it reads NLGIALFTFATLQVFALLVRP. H314 serves as a coordination point for heme b. The next 2 helical transmembrane spans lie at 316 to 336 and 349 to 369; these read TVGYTTIILSIVNIFKGFDIL and ILIFLGACVLILEPLTWFIVL. Positions 376–404 are disordered; it reads GNTVAAPTSSKYSNGVNGTTTTGPHHQDA. Positions 380-404 are enriched in polar residues; the sequence is AAPTSSKYSNGVNGTTTTGPHHQDA.

Heme b serves as cofactor.

It localises to the membrane. Its function is as follows. May act as a catecholamine-responsive trans-membrane electron transporter. The polypeptide is Cytochrome b561 and DOMON domain-containing protein At5g35735 (Arabidopsis thaliana (Mouse-ear cress)).